A 160-amino-acid polypeptide reads, in one-letter code: Globin CTT-Y (160 aa).

The first 16 residues, 1–16 (MKVLAIFALCIIGALA), serve as a signal peptide directing secretion. The Globin domain maps to 17 to 160 (TPCDDFKIMQ…IRKVINANLE (144 aa)). 2 residues coordinate heme b: His74 and His109.

This sequence belongs to the globin family.

The protein is Globin CTT-Y (CTT-Y) of Chironomus thummi piger (Midge).